The sequence spans 379 residues: Cobalt-precorrin-5B C(1)-methyltransferase (379 aa).

This sequence belongs to the CbiD family.

The catalysed reaction is Co-precorrin-5B + S-adenosyl-L-methionine = Co-precorrin-6A + S-adenosyl-L-homocysteine. It participates in cofactor biosynthesis; adenosylcobalamin biosynthesis; cob(II)yrinate a,c-diamide from sirohydrochlorin (anaerobic route): step 6/10. Its function is as follows. Catalyzes the methylation of C-1 in cobalt-precorrin-5B to form cobalt-precorrin-6A. This chain is Cobalt-precorrin-5B C(1)-methyltransferase, found in Salmonella typhimurium (strain LT2 / SGSC1412 / ATCC 700720).